The sequence spans 416 residues: Probable glucan 1,3-beta-glucosidase A (416 aa).

A signal peptide spans 1 to 22 (MIFKFSQKALVALCLVVGLAEA). Glutamate 211 (proton donor) is an active-site residue. Disulfide bonds link cysteine 291/cysteine 415 and cysteine 316/cysteine 342. The active-site Nucleophile is glutamate 308.

Belongs to the glycosyl hydrolase 5 (cellulase A) family. In terms of assembly, monomer. Mn(2+) serves as cofactor.

The protein localises to the secreted. It carries out the reaction Successive hydrolysis of beta-D-glucose units from the non-reducing ends of (1-&gt;3)-beta-D-glucans, releasing alpha-glucose.. Beta-glucanases participate in the metabolism of beta-glucan, the main structural component of the cell wall. It could also function biosynthetically as a transglycosylase. The polypeptide is Probable glucan 1,3-beta-glucosidase A (exgA) (Neosartorya fischeri (strain ATCC 1020 / DSM 3700 / CBS 544.65 / FGSC A1164 / JCM 1740 / NRRL 181 / WB 181) (Aspergillus fischerianus)).